A 305-amino-acid polypeptide reads, in one-letter code: Glycine--tRNA ligase alpha subunit (305 aa).

It belongs to the class-II aminoacyl-tRNA synthetase family. In terms of assembly, tetramer of two alpha and two beta subunits.

The protein localises to the cytoplasm. The enzyme catalyses tRNA(Gly) + glycine + ATP = glycyl-tRNA(Gly) + AMP + diphosphate. This Janthinobacterium sp. (strain Marseille) (Minibacterium massiliensis) protein is Glycine--tRNA ligase alpha subunit.